The chain runs to 81 residues: Neuronatin (81 aa).

This sequence belongs to the neuronatin family.

Functionally, may participate in the maintenance of segment identity in the hindbrain and pituitary development, and maturation or maintenance of the overall structure of the nervous system. May function as a regulatory subunit of ion channels. This is Neuronatin (NNAT) from Sus scrofa (Pig).